Here is a 136-residue protein sequence, read N- to C-terminus: Small ribosomal subunit protein uS9 (136 aa).

This sequence belongs to the universal ribosomal protein uS9 family.

This chain is Small ribosomal subunit protein uS9, found in Borrelia recurrentis (strain A1).